A 397-amino-acid polypeptide reads, in one-letter code: MSELKLDPYFGEYGGMYVPQILMPALKQLETAFVEAQQDPEFLTEFHDLLKNYAGRPTALTLTRNLSPNPKVKIYLKREDLLHGGAHKTNQVLGQALLAKRMGKKEIIAETGAGQHGVATALACALLGLKCKVYMGAKDVARQSPNVFRMRLMGAEVIPVTSGSATLKDACNEAMRDWSGSYDRAHYLLGTAAGPHPFPTIVREFQRMIGAETKAQMLEKEGRLPDAVIACVGGGSNAIGMFADFIDEPSVKLIGVEPAGKGIDTPMHGAPLKHGKTGIFFGMKAPLMQDAHGQIEESYSISAGLDFPSVGPQHAYLNATGRATYESATDDEALEAFQLLARSEGIIPALESAHALAYALRLAKDATEEQIIVVNLSGRGDKDIFTVSDILDGKASA.

Lysine 88 is subject to N6-(pyridoxal phosphate)lysine.

Belongs to the TrpB family. As to quaternary structure, tetramer of two alpha and two beta chains. The cofactor is pyridoxal 5'-phosphate.

The catalysed reaction is (1S,2R)-1-C-(indol-3-yl)glycerol 3-phosphate + L-serine = D-glyceraldehyde 3-phosphate + L-tryptophan + H2O. It participates in amino-acid biosynthesis; L-tryptophan biosynthesis; L-tryptophan from chorismate: step 5/5. The beta subunit is responsible for the synthesis of L-tryptophan from indole and L-serine. The sequence is that of Tryptophan synthase beta chain from Shewanella amazonensis (strain ATCC BAA-1098 / SB2B).